Consider the following 343-residue polypeptide: Protein RecA (343 aa).

Gly-66–Thr-73 provides a ligand contact to ATP.

The protein belongs to the RecA family.

The protein localises to the cytoplasm. Can catalyze the hydrolysis of ATP in the presence of single-stranded DNA, the ATP-dependent uptake of single-stranded DNA by duplex DNA, and the ATP-dependent hybridization of homologous single-stranded DNAs. It interacts with LexA causing its activation and leading to its autocatalytic cleavage. The polypeptide is Protein RecA (Nitrosomonas europaea (strain ATCC 19718 / CIP 103999 / KCTC 2705 / NBRC 14298)).